The primary structure comprises 439 residues: Glycosyl hydrolase DigH (439 aa).

The N-terminal stretch at 1–27 (MDICSRNKKLTIRRPAILVALALLLCS) is a signal peptide. Cys28 carries N-palmitoyl cysteine lipidation. A lipid anchor (S-diacylglycerol cysteine) is attached at Cys28. Residues 34–54 (ESMVTPPAGSKPPATTQQSSQ) are disordered.

It belongs to the glycosyl hydrolase-like 10 (GHL10) family.

It localises to the cell outer membrane. In terms of biological role, divisome-localized glycosyl hydrolase that cleaves peptide-free (denuded) peptidoglycans. The polypeptide is Glycosyl hydrolase DigH (Escherichia coli O157:H7).